Here is a 550-residue protein sequence, read N- to C-terminus: Small ribosomal subunit protein uS3m (550 aa).

The disordered stretch occupies residues 112–133 (NDDTEEERNEVGGRGAGKRVES).

This sequence belongs to the universal ribosomal protein uS3 family.

It localises to the mitochondrion. This chain is Small ribosomal subunit protein uS3m (RPS3), found in Oenothera berteroana (Bertero's evening primrose).